Reading from the N-terminus, the 327-residue chain is Phenylalanine--tRNA ligase alpha subunit (327 aa).

Mg(2+) is bound at residue Glu252.

Belongs to the class-II aminoacyl-tRNA synthetase family. Phe-tRNA synthetase alpha subunit type 1 subfamily. In terms of assembly, tetramer of two alpha and two beta subunits. Requires Mg(2+) as cofactor.

Its subcellular location is the cytoplasm. It catalyses the reaction tRNA(Phe) + L-phenylalanine + ATP = L-phenylalanyl-tRNA(Phe) + AMP + diphosphate + H(+). The protein is Phenylalanine--tRNA ligase alpha subunit of Sodalis glossinidius (strain morsitans).